The sequence spans 864 residues: Seed linoleate 9S-lipoxygenase-2 (864 aa).

Residues 46–171 (SGINIIGSTL…LYKSPRIFFA (126 aa)) form the PLAT domain. In terms of domain architecture, Lipoxygenase spans 174–864 (SYLPSETPSP…FRGIPNSISI (691 aa)). The disordered stretch occupies residues 230-264 (PILGGSSTHPYPRRGRTGRYPTRKDPNSEKPATET). A compositionally biased stretch (basic and acidic residues) spans 251-264 (TRKDPNSEKPATET). Residues His524, His529, His716, Asn720, and Ile864 each contribute to the Fe cation site.

Belongs to the lipoxygenase family. It depends on Fe cation as a cofactor.

It localises to the cytoplasm. The catalysed reaction is (9Z,12Z)-octadecadienoate + O2 = (9S)-hydroperoxy-(10E,12Z)-octadecadienoate. It participates in lipid metabolism; oxylipin biosynthesis. Plant lipoxygenase may be involved in a number of diverse aspects of plant physiology including growth and development, pest resistance, and senescence or responses to wounding. It catalyzes the hydroperoxidation of lipids containing a cis,cis-1,4-pentadiene structure. The protein is Seed linoleate 9S-lipoxygenase-2 (LOX1.2) of Pisum sativum (Garden pea).